A 363-amino-acid chain; its full sequence is Ferrochelatase (363 aa).

Histidine 209 and glutamate 290 together coordinate Fe cation.

Belongs to the ferrochelatase family.

The protein resides in the cytoplasm. It carries out the reaction heme b + 2 H(+) = protoporphyrin IX + Fe(2+). It functions in the pathway porphyrin-containing compound metabolism; protoheme biosynthesis; protoheme from protoporphyrin-IX: step 1/1. Catalyzes the ferrous insertion into protoporphyrin IX. This is Ferrochelatase from Azoarcus sp. (strain BH72).